The chain runs to 161 residues: Nucleotide-binding protein Bpro_1596 (161 aa).

The protein belongs to the YajQ family.

In terms of biological role, nucleotide-binding protein. The protein is Nucleotide-binding protein Bpro_1596 of Polaromonas sp. (strain JS666 / ATCC BAA-500).